The chain runs to 116 residues: Large ribosomal subunit protein uL22 (116 aa).

This sequence belongs to the universal ribosomal protein uL22 family. As to quaternary structure, part of the 50S ribosomal subunit.

Its function is as follows. This protein binds specifically to 23S rRNA; its binding is stimulated by other ribosomal proteins, e.g. L4, L17, and L20. It is important during the early stages of 50S assembly. It makes multiple contacts with different domains of the 23S rRNA in the assembled 50S subunit and ribosome. Functionally, the globular domain of the protein is located near the polypeptide exit tunnel on the outside of the subunit, while an extended beta-hairpin is found that lines the wall of the exit tunnel in the center of the 70S ribosome. The protein is Large ribosomal subunit protein uL22 of Gloeobacter violaceus (strain ATCC 29082 / PCC 7421).